Reading from the N-terminus, the 72-residue chain is Alpha-conotoxin SII (72 aa).

The N-terminal stretch at 1–21 (MGMRMMFTVFLLVVLATTVVS) is a signal peptide. The propeptide occupies 22–50 (FPSDRASDGRDDEAKDERSDMHESDRNGR). Positions 23–51 (PSDRASDGRDDEAKDERSDMHESDRNGRG) are disordered. Basic and acidic residues predominate over residues 26 to 49 (RASDGRDDEAKDERSDMHESDRNG). Disulfide bonds link Cys52-Cys68, Cys53-Cys58, and Cys54-Cys64. The propeptide occupies 70–72 (RTL).

It belongs to the conotoxin A superfamily. The disulfide bond Cys-52-Cys-68 (Cys I-VI), which corresponds to an extra disulfide bond when compared to the cysteine framework I (CC-C-C), does contribute to conotoxin SII stability and imparts a unique binding mode at the nAChR. In terms of tissue distribution, expressed by the venom duct.

It localises to the secreted. Functionally, alpha-conotoxins act on postsynaptic membranes, they bind to the nicotinic acetylcholine receptors (nAChR) and thus inhibit them. This toxin potently inhibits the rodent muscle nAChR (IC(50)=120 nM (adult subtype, alpha-1-beta-1-delta-epsilon/CHRNA1-CHRNB1-CHRND-CHRNE) and IC(50)=370 nM (fetal subtype, alpha-1-beta-1-gamma-delta/CHRNA1-CHRNB1-CHRNG-CHRND)) and weakly inhibits neuronal nAChRs. In contrast to alpha-conotoxins bearing 2 disulfide bonds (framework I), this conotoxin acts via a unique binding mode with the helix and the N- and C-termini buried in the binding pocket of muscle nAChRs. In Conus striatus (Striated cone), this protein is Alpha-conotoxin SII.